The following is a 546-amino-acid chain: Probable protein kinase UbiB (546 aa).

The region spanning 124–502 (DFDIQPLASA…HVRQSQSRYL (379 aa)) is the Protein kinase domain. Residues 130 to 138 (LASASIAQV) and K153 contribute to the ATP site. D288 serves as the catalytic Proton acceptor. The next 2 helical transmembrane spans lie at 501-521 (YLLG…VNRP) and 522-542 (EWGL…LVGW).

The protein belongs to the ABC1 family. UbiB subfamily.

It is found in the cell inner membrane. The protein operates within cofactor biosynthesis; ubiquinone biosynthesis [regulation]. Its function is as follows. Is probably a protein kinase regulator of UbiI activity which is involved in aerobic coenzyme Q (ubiquinone) biosynthesis. This chain is Probable protein kinase UbiB, found in Salmonella enteritidis PT4 (strain P125109).